Consider the following 20-residue polypeptide: Ranalexin-1Cb (20 aa).

A disulfide bond links cysteine 14 and cysteine 20.

As to expression, expressed by the skin glands.

The protein resides in the secreted. Functionally, antibacterial activity against Gram-positive bacterium S.aureus and Gram-negative bacterium E.coli. Has activity against C.albicans. The polypeptide is Ranalexin-1Cb (Lithobates clamitans (Green frog)).